The sequence spans 197 residues: NADH-quinone oxidoreductase subunit B (197 aa).

4 residues coordinate [4Fe-4S] cluster: Cys63, Cys64, Cys129, and Cys159.

This sequence belongs to the complex I 20 kDa subunit family. NDH-1 is composed of 14 different subunits. Subunits NuoB, C, D, E, F, and G constitute the peripheral sector of the complex. [4Fe-4S] cluster serves as cofactor.

The protein localises to the cell inner membrane. It carries out the reaction a quinone + NADH + 5 H(+)(in) = a quinol + NAD(+) + 4 H(+)(out). Functionally, NDH-1 shuttles electrons from NADH, via FMN and iron-sulfur (Fe-S) centers, to quinones in the respiratory chain. The immediate electron acceptor for the enzyme in this species is believed to be a menaquinone. Couples the redox reaction to proton translocation (for every two electrons transferred, four hydrogen ions are translocated across the cytoplasmic membrane), and thus conserves the redox energy in a proton gradient. The protein is NADH-quinone oxidoreductase subunit B of Bacteroides thetaiotaomicron (strain ATCC 29148 / DSM 2079 / JCM 5827 / CCUG 10774 / NCTC 10582 / VPI-5482 / E50).